Consider the following 241-residue polypeptide: Carboxy-S-adenosyl-L-methionine synthase (241 aa).

Residues Tyr-38, 63-65, 88-89, 116-117, Asn-131, and Arg-198 each bind S-adenosyl-L-methionine; these read GCS, DN, and DI.

The protein belongs to the class I-like SAM-binding methyltransferase superfamily. Cx-SAM synthase family. As to quaternary structure, homodimer.

It catalyses the reaction prephenate + S-adenosyl-L-methionine = carboxy-S-adenosyl-L-methionine + 3-phenylpyruvate + H2O. Functionally, catalyzes the conversion of S-adenosyl-L-methionine (SAM) to carboxy-S-adenosyl-L-methionine (Cx-SAM). This Actinobacillus pleuropneumoniae serotype 3 (strain JL03) protein is Carboxy-S-adenosyl-L-methionine synthase.